The sequence spans 411 residues: Ornithine cyclodeaminase (411 aa).

The NAD(+) site is built by Asn236, Ala237, Asp315, Thr347, Met348, Leu349, His350, Asp368, Asp391, and Val392.

The protein belongs to the AgrE/ArgZ ornithine cyclodeaminase family. It depends on NAD(+) as a cofactor.

The catalysed reaction is L-ornithine = L-proline + NH4(+). Functionally, catalyzes the conversion of ornithine to proline, with the release of ammonia. In Methanothermobacter thermautotrophicus (strain ATCC 29096 / DSM 1053 / JCM 10044 / NBRC 100330 / Delta H) (Methanobacterium thermoautotrophicum), this protein is Ornithine cyclodeaminase.